The following is a 348-amino-acid chain: N-formyl peptide receptor 2 (348 aa).

Asn-1 carries N-linked (GlcNAc...) asparagine glycosylation. The Extracellular segment spans residues 1 to 24 (NFSTPLNEHEEVSYESAGYTVLRI). Residues 25-47 (LPLVVLGVTFVLGVLGNGLVIWV) traverse the membrane as a helical segment. Over 48–58 (AGFRMTRTVTT) the chain is Cytoplasmic. The chain crosses the membrane as a helical span at residues 59–80 (ICYLNLALADFSFTATLPFLIV). Topologically, residues 81–97 (SMAMGEKWPFGWFLCKL) are extracellular. A disulfide bridge links Cys-95 with Cys-173. Residues 98–118 (IHIVVDINLFGSVFLIGFIAL) traverse the membrane as a helical segment. Topologically, residues 119-137 (DRCICVLHPVWAQNHRTVS) are cytoplasmic. A helical membrane pass occupies residues 138–159 (LAMKVIVGPWILALVLTLPVFL). Over 160–202 (FLTTVTIPNGDTYCTFNFASWGGTPEERQKVAITMLTARGIIR) the chain is Extracellular. Residues 203-223 (FVIGFSLPMSIVAICYGLIAA) form a helical membrane-spanning segment. Residues 224–239 (KIHKKGMIKSSRPLRV) lie on the Cytoplasmic side of the membrane. A helical transmembrane segment spans residues 240 to 263 (LTAVVASFFICWFPFQLVALLGTV). Over 264-283 (WLKEMLFYGKYKIIDILVNP) the chain is Extracellular. The chain crosses the membrane as a helical span at residues 284-303 (TSSLAFFNSCLNPMLYVFVG). The Cytoplasmic segment spans residues 304–348 (QDFRERLIHSLPTSLERALSEDSAPTNDTAASCASPPAETELQAM). Residues 323 to 348 (SEDSAPTNDTAASCASPPAETELQAM) form a disordered region. Residues 326–335 (SAPTNDTAAS) show a composition bias toward polar residues.

The protein belongs to the G-protein coupled receptor 1 family. Interacts with APP; the interaction takes place at the cell surface and the complex is then rapidly internalized.

It localises to the cell membrane. Its function is as follows. Low affinity receptor for N-formyl-methionyl peptides, which are powerful neutrophil chemotactic factors. Binding of FMLP to the receptor causes activation of neutrophils. This response is mediated via a G-protein that activates a phosphatidylinositol-calcium second messenger system. Receptor for the chemokine-like protein FAM19A5, mediating FAM19A5-stimulated macrophage chemotaxis and the inhibitory effect on TNFSF11/RANKL-induced osteoclast differentiation. This chain is N-formyl peptide receptor 2 (FPR2), found in Gorilla gorilla gorilla (Western lowland gorilla).